Reading from the N-terminus, the 268-residue chain is Small ribosomal subunit protein uS2 (268 aa).

Residues 233 to 268 (SVREEEFAEAAAEGEEKPARRAPAKKAAKKGDDAQA) are disordered.

It belongs to the universal ribosomal protein uS2 family.

This Stenotrophomonas maltophilia (strain K279a) protein is Small ribosomal subunit protein uS2.